Reading from the N-terminus, the 395-residue chain is Lipid-A-disaccharide synthase (395 aa).

Belongs to the LpxB family.

The catalysed reaction is a lipid X + a UDP-2-N,3-O-bis[(3R)-3-hydroxyacyl]-alpha-D-glucosamine = a lipid A disaccharide + UDP + H(+). Its pathway is bacterial outer membrane biogenesis; LPS lipid A biosynthesis. In terms of biological role, condensation of UDP-2,3-diacylglucosamine and 2,3-diacylglucosamine-1-phosphate to form lipid A disaccharide, a precursor of lipid A, a phosphorylated glycolipid that anchors the lipopolysaccharide to the outer membrane of the cell. The chain is Lipid-A-disaccharide synthase from Bordetella avium (strain 197N).